We begin with the raw amino-acid sequence, 501 residues long: Glycerol kinase (501 aa).

Threonine 11 provides a ligand contact to ADP. Positions 11, 12, and 13 each coordinate ATP. A sn-glycerol 3-phosphate-binding site is contributed by threonine 11. Arginine 15 lines the ADP pocket. Sn-glycerol 3-phosphate contacts are provided by arginine 81, glutamate 82, tyrosine 133, and aspartate 242. Glycerol contacts are provided by arginine 81, glutamate 82, tyrosine 133, aspartate 242, and glutamine 243. The ADP site is built by threonine 264 and glycine 307. Residues threonine 264, glycine 307, glutamine 311, and glycine 409 each contribute to the ATP site. Glycine 409 and asparagine 413 together coordinate ADP.

It belongs to the FGGY kinase family.

It carries out the reaction glycerol + ATP = sn-glycerol 3-phosphate + ADP + H(+). Its pathway is polyol metabolism; glycerol degradation via glycerol kinase pathway; sn-glycerol 3-phosphate from glycerol: step 1/1. Inhibited by fructose 1,6-bisphosphate (FBP). Functionally, key enzyme in the regulation of glycerol uptake and metabolism. Catalyzes the phosphorylation of glycerol to yield sn-glycerol 3-phosphate. In Borreliella burgdorferi (strain ATCC 35210 / DSM 4680 / CIP 102532 / B31) (Borrelia burgdorferi), this protein is Glycerol kinase.